Here is a 1203-residue protein sequence, read N- to C-terminus: DNA-directed RNA polymerase subunit beta' (1203 aa).

The Zn(2+) site is built by Cys60, Cys62, Cys75, and Cys78. Mg(2+)-binding residues include Asp449, Asp451, and Asp453. Zn(2+) contacts are provided by Cys818, Cys892, Cys899, and Cys902.

The protein belongs to the RNA polymerase beta' chain family. In terms of assembly, the RNAP catalytic core consists of 2 alpha, 1 beta, 1 beta' and 1 omega subunit. When a sigma factor is associated with the core the holoenzyme is formed, which can initiate transcription. The cofactor is Mg(2+). Zn(2+) serves as cofactor.

The enzyme catalyses RNA(n) + a ribonucleoside 5'-triphosphate = RNA(n+1) + diphosphate. In terms of biological role, DNA-dependent RNA polymerase catalyzes the transcription of DNA into RNA using the four ribonucleoside triphosphates as substrates. This chain is DNA-directed RNA polymerase subunit beta', found in Bacillus cereus (strain ATCC 10987 / NRS 248).